Reading from the N-terminus, the 122-residue chain is Large ribosomal subunit protein uL14 (122 aa).

The protein belongs to the universal ribosomal protein uL14 family. Part of the 50S ribosomal subunit. Forms a cluster with proteins L3 and L19. In the 70S ribosome, L14 and L19 interact and together make contacts with the 16S rRNA in bridges B5 and B8.

Functionally, binds to 23S rRNA. Forms part of two intersubunit bridges in the 70S ribosome. The polypeptide is Large ribosomal subunit protein uL14 (Francisella tularensis subsp. holarctica (strain LVS)).